A 698-amino-acid polypeptide reads, in one-letter code: MIPVEALTPFEARIEHAELVETIARWDEAYHAKDAPEVPDDVYDGAKRRLARIEGRFPELAAKSPIRDKVGAAPSEGFGKLVHAVPMLSLDNAFAPEDVAEFDAKVRRFLGLGDEAPLAYVAEPKIDGLSINLRYEGGRFVSAATRGDGAEGEDVTRNLETFPATQLPRTLGPDAPAVIEIRGEVYMTKADFLALNQRQEAAGEKLFANPRNAAAGSLRQLDPKVTASRPLSLFAYAMGEASAPPAASHWEYLERLKAWGFVVNPLIRRCDGVAGLLSAYESLGEARATLAYDIDGIVYKVDDIELQRRLGFVSRSPRWAIAHKFPAEQATTLLEAIDIQVGRTGALTPVARLTPVNVGGVVVSNATLHNEDEIARKDVRIGDTVIVQRAGDVIPQIVGVVPGKPRGAVPFVYPETCPVCGAHAVRPEGEVIRRCTGGLTCEAQAKERLKHFVSRNAFDIEGLGEKNIEFLWEKGWVRGPADIFRLKARNDAELLQRLENFEGWGKRSTEKLFESIKTRSAMGLERFIFALGIRQIGEATAKRLARHYGSFGAWRAAMLAGTEEARAELTSIEDIGPSVAGDLLDFFSEEHNVQAVDDLVAAMAALDGAVEDAKVIESSASPVAGKAVVFTGTLVTMTRPEAKARAEALGAKVVGSVSKKTDYVVVGADAGSKAAEAVKLGIATLSEQEWLALTGAAD.

NAD(+) is bound by residues 40–44 (DDVYD), 89–90 (SL), and Glu-123. Lys-125 serves as the catalytic N6-AMP-lysine intermediate. NAD(+) contacts are provided by Arg-146, Glu-184, Lys-300, and Lys-324. Zn(2+) contacts are provided by Cys-417, Cys-420, Cys-435, and Cys-441. Positions 618–698 (SSASPVAGKA…EWLALTGAAD (81 aa)) constitute a BRCT domain.

Belongs to the NAD-dependent DNA ligase family. LigA subfamily. Mg(2+) is required as a cofactor. Requires Mn(2+) as cofactor.

The enzyme catalyses NAD(+) + (deoxyribonucleotide)n-3'-hydroxyl + 5'-phospho-(deoxyribonucleotide)m = (deoxyribonucleotide)n+m + AMP + beta-nicotinamide D-nucleotide.. In terms of biological role, DNA ligase that catalyzes the formation of phosphodiester linkages between 5'-phosphoryl and 3'-hydroxyl groups in double-stranded DNA using NAD as a coenzyme and as the energy source for the reaction. It is essential for DNA replication and repair of damaged DNA. In Paramagnetospirillum magneticum (strain ATCC 700264 / AMB-1) (Magnetospirillum magneticum), this protein is DNA ligase.